The sequence spans 249 residues: PF03932 family protein CutC (249 aa).

It belongs to the CutC family.

The protein resides in the cytoplasm. This Bacteroides thetaiotaomicron (strain ATCC 29148 / DSM 2079 / JCM 5827 / CCUG 10774 / NCTC 10582 / VPI-5482 / E50) protein is PF03932 family protein CutC.